The following is a 214-amino-acid chain: Outer-membrane lipoprotein carrier protein (214 aa).

An N-terminal signal peptide occupies residues 1–24 (MKIKLAFAVLLALCLSLSVMPVLA).

Belongs to the LolA family. Monomer.

Its subcellular location is the periplasm. In terms of biological role, participates in the translocation of lipoproteins from the inner membrane to the outer membrane. Only forms a complex with a lipoprotein if the residue after the N-terminal Cys is not an aspartate (The Asp acts as a targeting signal to indicate that the lipoprotein should stay in the inner membrane). In Alkalilimnicola ehrlichii (strain ATCC BAA-1101 / DSM 17681 / MLHE-1), this protein is Outer-membrane lipoprotein carrier protein.